Reading from the N-terminus, the 506-residue chain is MEEFKRNLELDRSQQHDFIYPLIFQEYIYALAHDRGLNRSIFLEDTGYDNKSSLLIVKRLITHLITQMYQQNHFLFSGNDSNQNKFLGYNTNFYSQMIFEGFAVVVEIPFYLRLLSFLEGKERVKSHNLRSIHSIFPFLEDKFSHLVYVLDILISHPIHLEILVQTLRYWVKDASSLHLLRFFLHEYPIWNSLITPKKSSFSFSIRNQRFFLFLYNFNVWEYESIFVFLRNQSSHLRSISSETFLERISFYRKIELEVFTKDFKAILWVFKEPFLHYVRYRGKAILASKGTFLLMNKWKYYLVNFWQCYFYMWSQPRRININQLSNHSLDFLGYLSTVRLKPLMVRSQMIENSFLIENASKKFDTLMPITPMIGSLSKAKFCNVLGHPMSKPVWAALSDSDIIERFGRIYRNLSHYYSGSLKKMSLYRIKYILRLSCARTLARKHKSTVRAFLKRLGVGLLEEFFTEEEQVFYLTFAKASSNSGELYRRRVWYLDIICINDLANYE.

Belongs to the intron maturase 2 family. MatK subfamily.

The protein localises to the plastid. Its subcellular location is the chloroplast. Functionally, usually encoded in the trnK tRNA gene intron. Probably assists in splicing its own and other chloroplast group II introns. The polypeptide is Maturase K (Rhododendron tsusiophyllum (Rhododendron)).